The sequence spans 285 residues: 4-hydroxybenzoate octaprenyltransferase (285 aa).

A run of 7 helical transmembrane segments spans residues 33-53, 93-113, 134-154, 166-186, 209-229, 233-253, and 265-285; these read FLAA…LGVV, LILF…MNTL, ITYL…PMAY, WLLF…YAMV, LMIG…GIQL, SLYN…QWLI, and FLNN…SVLI.

Belongs to the UbiA prenyltransferase family. It depends on Mg(2+) as a cofactor.

The protein resides in the cell inner membrane. It catalyses the reaction all-trans-octaprenyl diphosphate + 4-hydroxybenzoate = 4-hydroxy-3-(all-trans-octaprenyl)benzoate + diphosphate. Its pathway is cofactor biosynthesis; ubiquinone biosynthesis. In terms of biological role, catalyzes the prenylation of para-hydroxybenzoate (PHB) with an all-trans polyprenyl group. Mediates the second step in the final reaction sequence of ubiquinone-8 (UQ-8) biosynthesis, which is the condensation of the polyisoprenoid side chain with PHB, generating the first membrane-bound Q intermediate 3-octaprenyl-4-hydroxybenzoate. This Aliivibrio salmonicida (strain LFI1238) (Vibrio salmonicida (strain LFI1238)) protein is 4-hydroxybenzoate octaprenyltransferase.